Reading from the N-terminus, the 189-residue chain is Isopentenyl-diphosphate Delta-isomerase 2 (189 aa).

Mn(2+)-binding residues include histidine 24 and histidine 30. Residues 28–160 (ALHRAISIFV…PETYSFWLAA (133 aa)) enclose the Nudix hydrolase domain. Cysteine 65 is a catalytic residue. Residue cysteine 65 participates in Mg(2+) binding. Histidine 67 provides a ligand contact to Mn(2+). Position 85 (glutamate 85) interacts with Mg(2+). Residues glutamate 110 and glutamate 112 each contribute to the Mn(2+) site. Glutamate 112 is a catalytic residue.

Belongs to the IPP isomerase type 1 family. Mg(2+) serves as cofactor. It depends on Mn(2+) as a cofactor.

It is found in the cytoplasm. It carries out the reaction isopentenyl diphosphate = dimethylallyl diphosphate. Its pathway is isoprenoid biosynthesis; dimethylallyl diphosphate biosynthesis; dimethylallyl diphosphate from isopentenyl diphosphate: step 1/1. Functionally, catalyzes the 1,3-allylic rearrangement of the homoallylic substrate isopentenyl (IPP) to its highly electrophilic allylic isomer, dimethylallyl diphosphate (DMAPP). The chain is Isopentenyl-diphosphate Delta-isomerase 2 from Aromatoleum aromaticum (strain DSM 19018 / LMG 30748 / EbN1) (Azoarcus sp. (strain EbN1)).